The primary structure comprises 1038 residues: uncharacterized protein (1038 aa).

The segment covering 1–14 (MEENTAQKQSNATG) has biased composition (polar residues). A disordered region spans residues 1-100 (MEENTAQKQS…QSENENYDFS (100 aa)). Over residues 58-71 (NPERELNSDGTDRI) the composition is skewed to basic and acidic residues. The segment covering 72–83 (IEEEEEEDDIEN) has biased composition (acidic residues). Phosphoserine occurs at positions 112, 113, and 114. Disordered stretches follow at residues 144–201 (GKDP…VKRR), 360–381 (ELDNTSEKATLETSSKPVTEQA), 422–441 (SHSNHSNEKFEQIPSPDEKL), 454–526 (QTTK…SGEL), and 556–575 (TNSEVETVTNDPSFSQQPGT). Over residues 156–179 (SSMASSSTRSSQSSQVSAIQPQSQ) the composition is skewed to low complexity. The span at 180-198 (DDNRVSDIRQMENRRELNV) shows a compositional bias: basic and acidic residues. Basic and acidic residues-rich tracts occupy residues 426–441 (HSNEKFEQIPSPDEKL) and 489–505 (DAEKEKDENLSKPEHHP). S436 is modified (phosphoserine). Over residues 506–522 (SITSVNSPFLYSPSKQP) the composition is skewed to polar residues. Phosphoserine is present on residues S618 and S856. Disordered stretches follow at residues 803-864 (RGSL…ASAD), 940-974 (GEAPKEAPPPPRSEPVSTTTKLAKRITQPSLSPAR), and 1005-1024 (KAKSEQSNAKSSSSSIKESK). A compositionally biased stretch (low complexity) spans 826–859 (TLSLKTSTTGLSSHSKSAENNSTQQSTTSPSINS). Residues 955–974 (VSTTTKLAKRITQPSLSPAR) show a composition bias toward polar residues. The segment covering 1009–1020 (EQSNAKSSSSSI) has biased composition (low complexity).

The protein localises to the cytoplasm. This is an uncharacterized protein from Schizosaccharomyces pombe (strain 972 / ATCC 24843) (Fission yeast).